A 399-amino-acid polypeptide reads, in one-letter code: Brefeldin A resistance protein (399 aa).

3 stretches are compositionally biased toward basic and acidic residues: residues Met-1–Ser-31, Ser-49–Thr-69, and Lys-101–Ala-130. Disordered stretches follow at residues Met-1–Phe-173 and Lys-191–Ile-269. Over residues Ser-138–Ser-157 the composition is skewed to low complexity. 2 stretches are compositionally biased toward basic and acidic residues: residues Ser-205–Glu-217 and Thr-241–Ser-252. A compositionally biased stretch (polar residues) spans Gly-253–Leu-263. Positions Thr-256 to Arg-396 constitute a RanBD1 domain.

Phosphorylated.

Its subcellular location is the nucleus. This is Brefeldin A resistance protein (hba1) from Schizosaccharomyces pombe (strain 972 / ATCC 24843) (Fission yeast).